A 99-amino-acid chain; its full sequence is uncharacterized protein (99 aa).

Positions 3 to 68 form a coiled coil; the sequence is ERLKAITNLL…EKFDSNRKFY (66 aa).

This is an uncharacterized protein from Aquifex aeolicus (strain VF5).